Reading from the N-terminus, the 445-residue chain is tRNA-2-methylthio-N(6)-dimethylallyladenosine synthase (445 aa).

The MTTase N-terminal domain occupies 2–122 (KKAFVKSYGC…LPDLLARSRE (121 aa)). [4Fe-4S] cluster contacts are provided by Cys-11, Cys-47, Cys-85, Cys-157, Cys-161, and Cys-164. One can recognise a Radical SAM core domain in the interval 143–378 (RTLGASAFLT…LDSQRHAYQR (236 aa)). The TRAM domain occupies 378 to 440 (RAAAGRVFDV…SNSLFGELVS (63 aa)).

It belongs to the methylthiotransferase family. MiaB subfamily. In terms of assembly, monomer. The cofactor is [4Fe-4S] cluster.

It localises to the cytoplasm. It carries out the reaction N(6)-dimethylallyladenosine(37) in tRNA + (sulfur carrier)-SH + AH2 + 2 S-adenosyl-L-methionine = 2-methylsulfanyl-N(6)-dimethylallyladenosine(37) in tRNA + (sulfur carrier)-H + 5'-deoxyadenosine + L-methionine + A + S-adenosyl-L-homocysteine + 2 H(+). Functionally, catalyzes the methylthiolation of N6-(dimethylallyl)adenosine (i(6)A), leading to the formation of 2-methylthio-N6-(dimethylallyl)adenosine (ms(2)i(6)A) at position 37 in tRNAs that read codons beginning with uridine. This chain is tRNA-2-methylthio-N(6)-dimethylallyladenosine synthase, found in Methylobacterium radiotolerans (strain ATCC 27329 / DSM 1819 / JCM 2831 / NBRC 15690 / NCIMB 10815 / 0-1).